Reading from the N-terminus, the 346-residue chain is Tetraacyldisaccharide 4'-kinase (346 aa).

62–69 is a binding site for ATP; the sequence is TAGGTGKT.

This sequence belongs to the LpxK family.

It carries out the reaction a lipid A disaccharide + ATP = a lipid IVA + ADP + H(+). The protein operates within glycolipid biosynthesis; lipid IV(A) biosynthesis; lipid IV(A) from (3R)-3-hydroxytetradecanoyl-[acyl-carrier-protein] and UDP-N-acetyl-alpha-D-glucosamine: step 6/6. In terms of biological role, transfers the gamma-phosphate of ATP to the 4'-position of a tetraacyldisaccharide 1-phosphate intermediate (termed DS-1-P) to form tetraacyldisaccharide 1,4'-bis-phosphate (lipid IVA). This is Tetraacyldisaccharide 4'-kinase from Xanthomonas oryzae pv. oryzae (strain MAFF 311018).